The chain runs to 133 residues: MAKEYSRTQRIGDQMQRELAQLIRREVKDPRVGLVTITAVEVSRDVGHAKIFITVMGQENAEQIAQSIKVLNSAAGFLRMQLAKEMKLRSVPQLHFHYDESVARGAHLSALIERAVAEDSQHGDAPAPEDAKE.

Belongs to the RbfA family. As to quaternary structure, monomer. Binds 30S ribosomal subunits, but not 50S ribosomal subunits or 70S ribosomes.

The protein resides in the cytoplasm. In terms of biological role, one of several proteins that assist in the late maturation steps of the functional core of the 30S ribosomal subunit. Associates with free 30S ribosomal subunits (but not with 30S subunits that are part of 70S ribosomes or polysomes). Required for efficient processing of 16S rRNA. May interact with the 5'-terminal helix region of 16S rRNA. The sequence is that of Ribosome-binding factor A from Pseudomonas fluorescens (strain ATCC BAA-477 / NRRL B-23932 / Pf-5).